The following is a 247-amino-acid chain: MASQPPEDTAESQASDELECKICYNRYNLKQRKPKVLECCHRVCAKCLYKIIDFGDSPQGVIVCPFCRFETCLPDDEVSSLPDDNNILVNLTCGGKGKKCLPENPTELLLTPKRLASLVSPSHTSSNCLVITIMEVQRESSPSLSSTPVVEFYRPASFDSVTTVSHNWTVWNCTSLLFQTSIRVLVWLLGLLYFSSLPLGIYLLVSKKVTLGVVFVSLVPSSLVILMVYGFCQCVCHEFLDCMAPPS.

The segment at 20–68 (CKICYNRYNLKQRKPKVLECCHRVCAKCLYKIIDFGDSPQGVIVCPFCR) adopts an RING-type zinc-finger fold. Helical transmembrane passes span 184-204 (VLVW…IYLL) and 211-231 (LGVV…VYGF).

As to quaternary structure, interacts with ATP6V0C. As to expression, up-regulated in neuronal cells subjected to cell death-inducing injuries, such as oxygen and glucose deprivation (at protein level). Could be up-regulated in Alzheimer disease brains. Highly expressed in innate immune organs such as lymph nodes and spleen and in immune cells such as macrophages and dendritic cells.

It localises to the membrane. It is found in the cytoplasm. It carries out the reaction S-ubiquitinyl-[E2 ubiquitin-conjugating enzyme]-L-cysteine + [acceptor protein]-L-lysine = [E2 ubiquitin-conjugating enzyme]-L-cysteine + N(6)-ubiquitinyl-[acceptor protein]-L-lysine.. The protein operates within protein modification; protein ubiquitination. Its function is as follows. E3 ubiquitin-protein ligase that mediates the ubiquitination of ATP6V0C and targets it to degradation via the ubiquitin-proteasome pathway. Also plays a role in the inhibition of TLR-triggered innate immune response by mediating 'Lys'-48-linked ubiquitination and subsequent degradation of NF-kappa-B component RELA. The sequence is that of E3 ubiquitin-protein ligase RNF182 (RNF182) from Homo sapiens (Human).